Here is a 208-residue protein sequence, read N- to C-terminus: FMN-dependent NADH:quinone oxidoreductase 4 (208 aa).

The protein belongs to the azoreductase type 1 family. In terms of assembly, homodimer. FMN serves as cofactor.

It carries out the reaction 2 a quinone + NADH + H(+) = 2 a 1,4-benzosemiquinone + NAD(+). The enzyme catalyses N,N-dimethyl-1,4-phenylenediamine + anthranilate + 2 NAD(+) = 2-(4-dimethylaminophenyl)diazenylbenzoate + 2 NADH + 2 H(+). Its function is as follows. Quinone reductase that provides resistance to thiol-specific stress caused by electrophilic quinones. Also exhibits azoreductase activity. Catalyzes the reductive cleavage of the azo bond in aromatic azo compounds to the corresponding amines. This chain is FMN-dependent NADH:quinone oxidoreductase 4, found in Bacillus cereus (strain ATCC 10987 / NRS 248).